Reading from the N-terminus, the 552-residue chain is Chaperonin GroEL 1 (552 aa).

ATP contacts are provided by residues 30–33, Lys51, 87–91, Gly415, 479–481, and Asp495; these read TLGP, DGTTT, and NAA.

The protein belongs to the chaperonin (HSP60) family. As to quaternary structure, forms a cylinder of 14 subunits composed of two heptameric rings stacked back-to-back. Interacts with the co-chaperonin GroES.

The protein resides in the cytoplasm. It carries out the reaction ATP + H2O + a folded polypeptide = ADP + phosphate + an unfolded polypeptide.. Functionally, together with its co-chaperonin GroES, plays an essential role in assisting protein folding. The GroEL-GroES system forms a nano-cage that allows encapsulation of the non-native substrate proteins and provides a physical environment optimized to promote and accelerate protein folding. The sequence is that of Chaperonin GroEL 1 from Albidiferax ferrireducens (strain ATCC BAA-621 / DSM 15236 / T118) (Rhodoferax ferrireducens).